We begin with the raw amino-acid sequence, 242 residues long: MKEAIDQFIQQKQLSKNSRLAYTYDLEQFLEQVGTINDTSLRLYQSSLQSLKLSVQKRKLSAVNQFLYFLYNQKYIEHYYKLNIPKDQKENSSQGSLLDLSVFWQESQVPQGRLIALLILENGLLPSEILSIKVADIQLDFQILSVEKAGQKRIVQLSSKLTEELSRMASGTYLFEKKGKPYSRQWAFRQLEAFLSEKGQAGLSAQSLREQYILRQLKDKRSLHDIARDLGLKSITTLEKYR.

The Core-binding (CB) domain occupies 1–71; sequence MKEAIDQFIQ…AVNQFLYFLY (71 aa). The Tyr recombinase domain occupies 90–242; it reads ENSSQGSLLD…KSITTLEKYR (153 aa). Catalysis depends on residues Lys-148 and Arg-209. Tyr-241 acts as the O-(3'-phospho-DNA)-tyrosine intermediate in catalysis.

This sequence belongs to the 'phage' integrase family. XerD-like subfamily.

Its subcellular location is the cytoplasm. In terms of biological role, putative tyrosine recombinase. Not involved in the cutting and rejoining of the recombining DNA molecules on dif(SL) site. The protein is Tyrosine recombinase XerD-like of Streptococcus gordonii (strain Challis / ATCC 35105 / BCRC 15272 / CH1 / DL1 / V288).